The primary structure comprises 215 residues: Protein slowmo (215 aa).

Positions methionine 1 to lysine 170 constitute a PRELI/MSF1 domain.

Belongs to the slowmo family. Expressed in specific tissues such as the developing central nervous system (CNS) and both the male and female germline. In the CNS, it is restricted in a subset of cells during embryogenesis and early larval development. In embryos, it is also expressed in salivary glands. In the testis, expressed in somatic cyst cells throughout the distal region where the mitotic cysts develop, extending through to meiotic cysts.

The protein resides in the mitochondrion. Required to regulate peristaltic movement and also for germline proliferation in males and females. The polypeptide is Protein slowmo (slmo) (Drosophila melanogaster (Fruit fly)).